The following is a 799-amino-acid chain: Mitochondrial intermediate peptidase (799 aa).

His562 provides a ligand contact to Zn(2+). Residue Glu563 is part of the active site. Residues His566 and His569 each contribute to the Zn(2+) site.

It belongs to the peptidase M3 family. Requires Zn(2+) as cofactor.

It localises to the mitochondrion matrix. It catalyses the reaction Release of an N-terminal octapeptide as second stage of processing of some proteins imported into the mitochondrion.. In terms of biological role, cleaves proteins, imported into the mitochondrion, to their mature size. While most mitochondrial precursor proteins are processed to the mature form in one step by mitochondrial processing peptidase (MPP), the sequential cleavage by MIP of an octapeptide after initial processing by MPP is a required step for a subgroup of nuclear-encoded precursor proteins destined for the matrix or the inner membrane. The protein is Mitochondrial intermediate peptidase (oct1) of Aspergillus niger (strain ATCC MYA-4892 / CBS 513.88 / FGSC A1513).